A 349-amino-acid chain; its full sequence is Diacylglycerol O-acyltransferase 2B (349 aa).

Helical transmembrane passes span 44 to 64 (ICLIIYLYLFTIPLLWPILIM) and 114 to 134 (YIMSYHPHGIISMAAFANFAT).

The protein belongs to the diacylglycerol acyltransferase family.

Its subcellular location is the endoplasmic reticulum membrane. It carries out the reaction an acyl-CoA + a 1,2-diacyl-sn-glycerol = a triacyl-sn-glycerol + CoA. The protein operates within glycerolipid metabolism; triacylglycerol biosynthesis. Catalyzes the terminal and only committed step in triacylglycerol synthesis by using diacylglycerol and fatty acyl CoA as substrates. Required for storage lipid synthesis. In Umbelopsis ramanniana (Oleaginous fungus), this protein is Diacylglycerol O-acyltransferase 2B (DGAT2B).